We begin with the raw amino-acid sequence, 142 residues long: Hemoglobin subunit alpha (142 aa).

The 141-residue stretch at 2–142 (VLSSQNKKAI…VAYELSSCYR (141 aa)) folds into the Globin domain. H60 serves as a coordination point for O2. H89 serves as a coordination point for heme b.

This sequence belongs to the globin family. In terms of assembly, heterotetramer of two alpha chains and two beta chains. Red blood cells.

In terms of biological role, involved in oxygen transport from gills to the various peripheral tissues. This chain is Hemoglobin subunit alpha (hba), found in Hemitrygon akajei (Red stingray).